The following is a 267-amino-acid chain: Lectin SfL-1 (267 aa).

4 consecutive repeat copies span residues 1–67 (GRYT…RRGD), 68–135 (SNNY…QSGG), 136–202 (DSYN…STGG), and 203–267 (SNYK…GTAI). The interval 1–267 (GRYTVQNQWG…GPIGFKGTAI (267 aa)) is 4 X approximate tandem repeats.

Monomer.

Functionally, lectin specific for high mannose N-glycans, recognizes the branched moiety of these glycans. Does not recognize other types of N-glycans or monosaccharides. The sequence is that of Lectin SfL-1 from Solieria filiformis (Red alga).